The chain runs to 222 residues: UPF0758 protein HSM_0009 (222 aa).

An MPN domain is found at 99 to 222 (QEFTSPDTVR…YFSFAEQGWI (124 aa)). The Zn(2+) site is built by H171, H173, and D184. The JAMM motif signature appears at 171 to 184 (HNHPSGVSTPSMAD).

Belongs to the UPF0758 family.

The chain is UPF0758 protein HSM_0009 from Histophilus somni (strain 2336) (Haemophilus somnus).